The following is a 221-amino-acid chain: Orotidine 5'-phosphate decarboxylase (221 aa).

Residues Asp12, Lys34, 60–69, Ser117, 170–180, Gly193, and Arg194 contribute to the substrate site; these read DFKVADIPNT and PGVGAQGGKAS. Residue Lys62 is the Proton donor of the active site.

It belongs to the OMP decarboxylase family. Type 1 subfamily. In terms of assembly, homodimer.

The catalysed reaction is orotidine 5'-phosphate + H(+) = UMP + CO2. It functions in the pathway pyrimidine metabolism; UMP biosynthesis via de novo pathway; UMP from orotate: step 2/2. Catalyzes the decarboxylation of orotidine 5'-monophosphate (OMP) to uridine 5'-monophosphate (UMP). This is Orotidine 5'-phosphate decarboxylase from Methanosarcina barkeri (strain Fusaro / DSM 804).